The chain runs to 229 residues: Ribonuclease HII (229 aa).

The RNase H type-2 domain maps to 34–223 (WPVAGADEAG…LRKSEDGPEM (190 aa)). A divalent metal cation contacts are provided by D40, E41, and D131. Positions 209–229 (MSFRPLRKSEDGPEMDELIPE) are disordered. The span at 220-229 (GPEMDELIPE) shows a compositional bias: acidic residues.

Belongs to the RNase HII family. Requires Mn(2+) as cofactor. Mg(2+) serves as cofactor.

The protein localises to the cytoplasm. It carries out the reaction Endonucleolytic cleavage to 5'-phosphomonoester.. Functionally, endonuclease that specifically degrades the RNA of RNA-DNA hybrids. The polypeptide is Ribonuclease HII (Rhizobium etli (strain CIAT 652)).